Consider the following 45-residue polypeptide: Protein PsbN (45 aa).

Residues phenylalanine 12 to glycine 30 form a helical membrane-spanning segment.

Belongs to the PsbN family.

It is found in the plastid. It localises to the chloroplast thylakoid membrane. In terms of biological role, may play a role in photosystem I and II biogenesis. In Adiantum capillus-veneris (Maidenhair fern), this protein is Protein PsbN.